A 372-amino-acid chain; its full sequence is MAKQYDMVECPFCDEVSKYEKLAKIGQGTFGEVFKAKHRQTGKKVALKKVLMENEKEGFPITALREIKILQLLKHENVVNLIEICRTKASPYNRCKGSIYLVFDFCEHDLAGLLSNTHVKFTLSEIKKVMQMLLNGLYYIHRNKILHRDMKAANVLITRDGVLKLADFGLARAFSLAKNSQPNRYTNRVVTLWYRPPELLLGERDYGPPIDLWGGGCIMAEMWTRSPIMQGNTEQHQLTLISQLCGSITPEVWPNVDKYELYQKLELPKGQKRKVKDRLKAYVKDPYALDLIDKLLVLDPAQRIDSDDALNHDFFWSDPMPSDLKNMLSTHNQSMFEYLAPPRRRGGHMPQQPANQGRNPAATNQTEFDRVF.

One can recognise a Protein kinase domain in the interval 19 to 315 (YEKLAKIGQG…SDDALNHDFF (297 aa)). Residues 25-33 (IGQGTFGEV) and Lys-48 each bind ATP. Asp-149 acts as the Proton acceptor in catalysis. The disordered stretch occupies residues 341–372 (PPRRRGGHMPQQPANQGRNPAATNQTEFDRVF). Polar residues predominate over residues 352-366 (QPANQGRNPAATNQT).

It belongs to the protein kinase superfamily. CMGC Ser/Thr protein kinase family. CDC2/CDKX subfamily. Associates with cyclin-T to form P-TEFb. Also associates with cyclin-K.

The protein localises to the nucleus. It carries out the reaction L-seryl-[protein] + ATP = O-phospho-L-seryl-[protein] + ADP + H(+). It catalyses the reaction L-threonyl-[protein] + ATP = O-phospho-L-threonyl-[protein] + ADP + H(+). The enzyme catalyses [DNA-directed RNA polymerase] + ATP = phospho-[DNA-directed RNA polymerase] + ADP + H(+). Functionally, member of the cyclin-dependent kinase pair (CDK9/cyclin-T) complex, also called positive transcription elongation factor b (P-TEFb), which facilitates the transition from abortive to production elongation by phosphorylating the CTD (C-terminal domain) of the large subunit of RNA polymerase II (RNAP II), SUPT5H and RDBP. The CDK9/cyclin-K complex also has a kinase activity toward CTD of RNAP II and can substitute for P-TEFb in vitro. The polypeptide is Cyclin-dependent kinase 9 (CDK9) (Gallus gallus (Chicken)).